A 1036-amino-acid chain; its full sequence is Protein CLEC16A (1036 aa).

In terms of domain architecture, FPL spans 51–198 (IRSITEILIW…AVRTITLNVY (148 aa)). Disordered regions lie at residues 375 to 416 (SLEM…DAEK), 437 to 458 (GTSVQEQNTTDEEKSAATNSEN), 876 to 967 (HSSP…PSLL), and 1008 to 1036 (SQLPTLPAADTETPAEGAVNPEPAEPTEH). Over residues 381 to 392 (HKGKKRMQKRPN) the composition is skewed to basic residues. Composition is skewed to low complexity over residues 877 to 891 (SSPSLSSPSPPFASG), 898 to 923 (STSHCDSGGSSSAPSATQSPADAPTT), and 943 to 954 (NSKPSKNSSARS).

Belongs to the CLEC16A/gop-1 family. As to quaternary structure, interacts with RNF41/NRDP1. Ubiquitously expressed. Expressed in pancreatic islets.

It is found in the endosome membrane. The protein resides in the lysosome membrane. In terms of biological role, regulator of mitophagy through the upstream regulation of the RNF41/NRDP1-PRKN pathway. Mitophagy is a selective form of autophagy necessary for mitochondrial quality control. The RNF41/NRDP1-PRKN pathway regulates autophagosome-lysosome fusion during late mitophagy. May protect RNF41/NRDP1 from proteasomal degradation, RNF41/NRDP1 which regulates proteasomal degradation of PRKN. Plays a key role in beta cells functions by regulating mitophagy/autophagy and mitochondrial health. This is Protein CLEC16A from Mus musculus (Mouse).